Reading from the N-terminus, the 382-residue chain is POU domain, class 3, transcription factor 2-A (382 aa).

3 disordered regions span residues 69–136 (PWAT…SSNG), 150–206 (GMIN…TPTS), and 348–382 (EKRMTPPGGTIPGAEDIYGASRDTPPHLGVQTSVQ). Positions 122-136 (STGSTHLSSMASSNG) are enriched in polar residues. Basic and acidic residues predominate over residues 165 to 178 (LRDSHDDHHGDHGH). A compositionally biased stretch (low complexity) spans 179 to 194 (QQVSQAQQQHSQLQGG). Residues 201 to 275 (EDTPTSDDLE…LLNKWLEEAD (75 aa)) form the POU-specific domain. Positions 293-352 (KRKKRTSIEVSVKGALESHFLKCPKPSAPEITSLADSLQLEKEVVRVWFCNRRQKEKRMT) form a DNA-binding region, homeobox.

This sequence belongs to the POU transcription factor family. Class-3 subfamily. As to expression, expressed in the developing brain and spinal cord. Also found in a restricted region of the auditory vesicle during development. In the adult, expression is restricted to the brain.

Its subcellular location is the nucleus. Its function is as follows. Transcription factor that may be implicated in patterning of the central nervous system during early development. The protein is POU domain, class 3, transcription factor 2-A (pou3f2-a) of Xenopus laevis (African clawed frog).